A 210-amino-acid chain; its full sequence is HTH-type transcriptional repressor FabR (210 aa).

The HTH tetR-type domain maps to 10–70 (KTRRSLVEAA…TMVDESGLML (61 aa)). Positions 33–52 (SLREVAREAGIAPTSFYRHF) form a DNA-binding region, H-T-H motif.

In terms of assembly, homodimer.

It localises to the cytoplasm. Functionally, represses the transcription of fabB, involved in unsaturated fatty acid (UFA) biosynthesis. By controlling UFA production, FabR directly influences the physical properties of the membrane bilayer. This chain is HTH-type transcriptional repressor FabR, found in Salmonella arizonae (strain ATCC BAA-731 / CDC346-86 / RSK2980).